The sequence spans 521 residues: Protein NRT1/ PTR FAMILY 5.5 (521 aa).

The next 12 membrane-spanning stretches (helical) occupy residues 3–23, 35–55, 62–82, 96–116, 134–154, 165–185, 279–299, 310–327, 356–376, 394–414, 440–460, and 478–498; these read VLSW…LYLT, AIVN…QFLV, FWML…LAIS, FYVA…SLGV, LVSF…AAIA, FTIP…GACS, VPLF…NTFF, FGSW…SEAA, PYGI…AAHV, VPMS…ITGI, VGVC…VGSV, and YYWV…IVTY.

This sequence belongs to the major facilitator superfamily. Proton-dependent oligopeptide transporter (POT/PTR) (TC 2.A.17) family. Expressed in roots.

The protein resides in the membrane. In Arabidopsis thaliana (Mouse-ear cress), this protein is Protein NRT1/ PTR FAMILY 5.5 (NPF5.5).